The sequence spans 362 residues: 3-isopropylmalate dehydrogenase (362 aa).

78–91 contributes to the NAD(+) binding site; it reads GPQWDTLPSDKRPE. Substrate-binding residues include Arg-98, Arg-108, Arg-136, and Asp-226. Residues Asp-226, Asp-250, and Asp-254 each coordinate Mg(2+). NAD(+) is bound at residue 284–296; that stretch reads GSAPDIAGQDKAN.

Belongs to the isocitrate and isopropylmalate dehydrogenases family. LeuB type 1 subfamily. As to quaternary structure, homodimer. Requires Mg(2+) as cofactor. It depends on Mn(2+) as a cofactor.

Its subcellular location is the cytoplasm. The enzyme catalyses (2R,3S)-3-isopropylmalate + NAD(+) = 4-methyl-2-oxopentanoate + CO2 + NADH. The protein operates within amino-acid biosynthesis; L-leucine biosynthesis; L-leucine from 3-methyl-2-oxobutanoate: step 3/4. Its function is as follows. Catalyzes the oxidation of 3-carboxy-2-hydroxy-4-methylpentanoate (3-isopropylmalate) to 3-carboxy-4-methyl-2-oxopentanoate. The product decarboxylates to 4-methyl-2 oxopentanoate. This Gloeobacter violaceus (strain ATCC 29082 / PCC 7421) protein is 3-isopropylmalate dehydrogenase.